Here is a 396-residue protein sequence, read N- to C-terminus: Anaerobic glycerol-3-phosphate dehydrogenase subunit C (396 aa).

4Fe-4S ferredoxin-type domains lie at 2–29 and 45–76; these read NDTSFENCIKCTVCTTACPVSRVNPGYP and DGALYDEALKYCINCKRCEVACPSDVKIGDII. The [4Fe-4S] cluster site is built by Cys-9, Cys-12, Cys-15, Cys-19, Cys-56, Cys-59, Cys-62, and Cys-66.

Composed of a catalytic GlpA/B dimer and of GlpC.

It is found in the cell inner membrane. The protein operates within polyol metabolism; glycerol degradation via glycerol kinase pathway; glycerone phosphate from sn-glycerol 3-phosphate (anaerobic route): step 1/1. In terms of biological role, electron transfer protein; may also function as the membrane anchor for the GlpAB dimer. The protein is Anaerobic glycerol-3-phosphate dehydrogenase subunit C (glpC) of Escherichia coli O157:H7.